A 308-amino-acid polypeptide reads, in one-letter code: N-acetylgalactosamine kinase AgaK (308 aa).

ATP is bound by residues 4 to 11 and 132 to 139; these read GLDIGGTK and GTGGGLCI. Zn(2+) is bound by residues His156, Cys174, Cys176, and Cys181.

Belongs to the ROK (NagC/XylR) family.

The protein resides in the cytoplasm. The catalysed reaction is N-acetyl-D-galactosamine + ATP = N-acetyl-D-galactosamine 6-phosphate + ADP + H(+). It carries out the reaction N-acetyl-D-glucosamine + ATP = N-acetyl-D-glucosamine 6-phosphate + ADP + H(+). Functionally, involved in the pathway of N-acetyl-D-galactosamine degradation. Catalyzes the phosphorylation of N-acetyl-D-galactosamine (GalNAc) to yield D-galactosamine 6-phosphate (GalN-6-P). It can also phosphorylate N-acetylglucosamine (GlcNAc). The protein is N-acetylgalactosamine kinase AgaK of Shewanella sp. (strain ANA-3).